A 918-amino-acid chain; its full sequence is von Willebrand factor A domain-containing protein DDB_G0292016 (918 aa).

Residues 44-172 form the VIT domain; that stretch reads KRCGLYSLKN…NVKVRVVISS (129 aa). Residues 299 to 467 enclose the VWFA domain; the sequence is EFIFLIDCSG…NMEKQVMKLL (169 aa). Residues 625–814 are disordered; that stretch reads VDIMNQSPPI…PSAPSQQKSV (190 aa). The segment covering 650–690 has biased composition (low complexity); that stretch reads ASGALSSSILSRKRSSSPSTATKRSSSSSFSSSYLSLSSSS. The span at 716 to 746 shows a compositional bias: acidic residues; that stretch reads YESDGGDQSSEQDEEEEDDCDDFHEDLDEDL. The span at 752-774 shows a compositional bias: basic and acidic residues; the sequence is DVDKKECEKECKKKDSSKVDLKV. Low complexity predominate over residues 777-814; sequence SKVPLPSRSPSVSKPTTTSLLSPSPKSAPSAPSQQKSV.

This is von Willebrand factor A domain-containing protein DDB_G0292016 from Dictyostelium discoideum (Social amoeba).